The following is a 443-amino-acid chain: Amino-acid acetyltransferase (443 aa).

The 140-residue stretch at 296-435 folds into the N-acetyltransferase domain; that stretch reads EQIRRATIND…KEMYNYQRRS (140 aa).

It belongs to the acetyltransferase family. ArgA subfamily. Homohexamer.

The protein localises to the cytoplasm. The catalysed reaction is L-glutamate + acetyl-CoA = N-acetyl-L-glutamate + CoA + H(+). Its pathway is amino-acid biosynthesis; L-arginine biosynthesis; N(2)-acetyl-L-ornithine from L-glutamate: step 1/4. In Enterobacter sp. (strain 638), this protein is Amino-acid acetyltransferase.